The chain runs to 108 residues: Putative transmembrane protein ORF108 (108 aa).

3 helical membrane passes run 11 to 31 (FIMG…SSII), 33 to 53 (IAMT…TVHF), and 69 to 89 (VGFL…LLII).

It is found in the host membrane. This chain is Putative transmembrane protein ORF108, found in Acidianus hospitalis (AFV-1).